The following is a 449-amino-acid chain: Telomere resolvase ResT (449 aa).

The cofactor is No cofactors were found to be necessary..

Its subcellular location is the cytoplasm. The protein resides in the nucleoid. Catalyzes the conservative, sequence-specific DNA breakage and reunion reaction that generates two hairpin telomeres from a replicated telomere substrate. Breaks two phosphodiester bonds in a single DNA duplex and joins each end with the opposite DNA strand to form covalently closed hairpin telomeres. In vitro relaxed-circular, open-circular and linearized plasmids, but not supercoiled DNA, are all substrates. Cleavage is position-dependent relative to conserved sequence elements. The sequence is that of Telomere resolvase ResT from Borreliella burgdorferi (strain ATCC 35210 / DSM 4680 / CIP 102532 / B31) (Borrelia burgdorferi).